Consider the following 1145-residue polypeptide: Structure-specific endonuclease subunit SLX4 (1145 aa).

The segment at 48–108 (ADIPVQPDPP…GKSKQQPSIS (61 aa)) is disordered. Positions 321 to 372 (ERETQKCRQLRQQHELVYAELERYYGDPQKLEEEVMQELDELEKLVADNMIE) form a coiled coil. Residues 382–393 (EAESSSTGSSPS) are compositionally biased toward low complexity. 3 disordered regions span residues 382 to 442 (EAES…EDEP), 613 to 634 (QSSHQLGILTTPNDTEHSSSFS), and 666 to 689 (SAEKRVSPAASPYKQSDASVDLTQ). Residues 395 to 410 (EPPDKRPKMTMEDKEN) are compositionally biased toward basic and acidic residues. 3 stretches are compositionally biased toward polar residues: residues 411–430 (LQPTTSKASLTVPAQSTRCT), 613–633 (QSSHQLGILTTPNDTEHSSSF), and 678–689 (YKQSDASVDLTQ).

It belongs to the SLX4 family. As to quaternary structure, forms a heterodimer with SLX1. Interacts with mei-9; catalytic subunit of the MEI-9-ERCC1 endonuclease.

It localises to the nucleus. In terms of biological role, regulatory subunit that interacts with and increases the activity of different structure-specific endonucleases. Has several distinct roles in protecting genome stability by resolving diverse forms of deleterious DNA structures originating from replication and recombination intermediates and from DNA damage. Component of the SLX1-SLX4 structure-specific endonuclease that resolves DNA secondary structures generated during DNA repair and recombination. Has endonuclease activity towards branched DNA substrates, introducing single-strand cuts in duplex DNA close to junctions with ss-DNA. Interacts with the structure-specific MEI-9-ERCC1 endonuclease to generate meiotic crossovers. The sequence is that of Structure-specific endonuclease subunit SLX4 (mus312) from Drosophila melanogaster (Fruit fly).